The chain runs to 590 residues: Aspartate--tRNA(Asp/Asn) ligase (590 aa).

An L-aspartate-binding site is contributed by Glu-172. The tract at residues 196 to 199 (QLFK) is aspartate. Arg-218 contacts L-aspartate. ATP is bound by residues 218–220 (RDE) and Gln-227. His-449 is an L-aspartate binding site. Glu-484 is an ATP binding site. Residue Arg-491 participates in L-aspartate binding. 536 to 539 (GVDR) contributes to the ATP binding site.

This sequence belongs to the class-II aminoacyl-tRNA synthetase family. Type 1 subfamily. In terms of assembly, homodimer.

It localises to the cytoplasm. The enzyme catalyses tRNA(Asx) + L-aspartate + ATP = L-aspartyl-tRNA(Asx) + AMP + diphosphate. Its function is as follows. Aspartyl-tRNA synthetase with relaxed tRNA specificity since it is able to aspartylate not only its cognate tRNA(Asp) but also tRNA(Asn). Reaction proceeds in two steps: L-aspartate is first activated by ATP to form Asp-AMP and then transferred to the acceptor end of tRNA(Asp/Asn). In Francisella tularensis subsp. holarctica (strain FTNF002-00 / FTA), this protein is Aspartate--tRNA(Asp/Asn) ligase.